The following is a 379-amino-acid chain: Cytochrome b (379 aa).

The next 4 membrane-spanning stretches (helical) occupy residues 33–53 (FGSL…FLAM), 77–98 (WLIR…FIHV), 113–133 (WNIG…GYVL), and 178–198 (FFAF…VHLL). Heme b-binding residues include His-83 and His-97. 2 residues coordinate heme b: His-182 and His-196. His-201 serves as a coordination point for a ubiquinone. 4 consecutive transmembrane segments (helical) span residues 226–246 (IKDL…ALFF), 288–308 (LGGV…PLLN), 320–340 (ITQT…WIGG), and 347–367 (FTMI…ILMP).

Belongs to the cytochrome b family. The cytochrome bc1 complex contains 11 subunits: 3 respiratory subunits (MT-CYB, CYC1 and UQCRFS1), 2 core proteins (UQCRC1 and UQCRC2) and 6 low-molecular weight proteins (UQCRH/QCR6, UQCRB/QCR7, UQCRQ/QCR8, UQCR10/QCR9, UQCR11/QCR10 and a cleavage product of UQCRFS1). This cytochrome bc1 complex then forms a dimer. Requires heme b as cofactor.

It is found in the mitochondrion inner membrane. Its function is as follows. Component of the ubiquinol-cytochrome c reductase complex (complex III or cytochrome b-c1 complex) that is part of the mitochondrial respiratory chain. The b-c1 complex mediates electron transfer from ubiquinol to cytochrome c. Contributes to the generation of a proton gradient across the mitochondrial membrane that is then used for ATP synthesis. This is Cytochrome b (MT-CYB) from Akodon dolores (Dolorous grass mouse).